The sequence spans 91 residues: Small ribosomal subunit protein bS16 (91 aa).

The protein belongs to the bacterial ribosomal protein bS16 family.

The protein is Small ribosomal subunit protein bS16 of Ruthia magnifica subsp. Calyptogena magnifica.